We begin with the raw amino-acid sequence, 135 residues long: T-cell receptor gamma chain V region V108A (135 aa).

Positions 1–18 (MLLLRWFTSCCLWVFGLG) are cleaved as a signal peptide. Residues 19-116 (QLEQTELSVT…EATYYCAVWM (98 aa)) are v segment. The j segment stretch occupies residues 117–135 (RWSSGFHKVFAEGTKLIVI).

This Mus musculus (Mouse) protein is T-cell receptor gamma chain V region V108A.